Reading from the N-terminus, the 1352-residue chain is Ubiquitin carboxyl-terminal hydrolase 31 (1352 aa).

Positions 1-16 (MSKVTAPGSGPPAAAS) are enriched in low complexity. 2 disordered regions span residues 1-62 (MSKV…RSVG) and 79-119 (SSEG…PPAC). Residues 32–43 (RAGGGGAGGPGA) are compositionally biased toward gly residues. Residues 44-62 (SGPAAPSSPSSPSSARSVG) are compositionally biased toward low complexity. Residues 95–117 (PPGPAAAPTPPPCPPPPASPAPP) are compositionally biased toward pro residues. Residues 128–765 (AGLRNHGNTC…TAYILFYQRR (638 aa)) form the USP domain. Cys137 acts as the Nucleophile in catalysis. The tract at residues 162-185 (RAGRPEPSPDPEQPAGRGAQGQGE) is disordered. The active-site Proton acceptor is His723. Disordered regions lie at residues 812 to 835 (LASL…FSTR), 919 to 939 (SSSY…AVGR), and 951 to 1352 (DESD…QKPQ). Residues 958–970 (LNSSVVDTQSKHS) are compositionally biased toward polar residues. Composition is skewed to low complexity over residues 992–1001 (VDQSDSVDSS), 1051–1070 (SSLS…SLKP), 1078–1089 (DSSSRGSGRHSS), and 1101–1138 (PKSQ…GPAT). The span at 1148 to 1159 (RTSDHSLSREGS) shows a compositional bias: basic and acidic residues. Residues 1160 to 1181 (RQSLGSDRASATSTSKPNSPRV) show a composition bias toward polar residues. Positions 1198 to 1210 (SSSMASLRSPSTS) are enriched in low complexity. Basic and acidic residues-rich tracts occupy residues 1215–1225 (LKRDSKSEDKG) and 1234–1243 (RQKETRRSTD). Positions 1251–1264 (SKKAGGSSVKSVCK) are enriched in low complexity. Lys1264 bears the N6-acetyllysine mark. Polar residues-rich tracts occupy residues 1278–1290 (PASQ…TTGK) and 1341–1352 (MQTSARPSQKPQ).

It belongs to the peptidase C19 family. Acetylated at Lys-1264. Acetylation decreases activity. Deacetylated by SIRT1. In terms of tissue distribution, widely expressed.

The catalysed reaction is Thiol-dependent hydrolysis of ester, thioester, amide, peptide and isopeptide bonds formed by the C-terminal Gly of ubiquitin (a 76-residue protein attached to proteins as an intracellular targeting signal).. Its function is as follows. Deubiquitinase that recognizes and hydrolyzes the peptide bond at the C-terminal Gly of ubiquitin. May play a role in the regulation of NF-kappa-B signaling pathway by deubiquitinating TRAF2. Functionally, (Microbial infection) Plays a positive role in foot-and-mouth disease and classical swine fever viral infection. Mechanistically, associates with internal ribosomal entry site (IRES) element within the 5'-untranslated region of viral genomes to promote translation of the virus-encoded polyprotein. The polypeptide is Ubiquitin carboxyl-terminal hydrolase 31 (USP31) (Homo sapiens (Human)).